The chain runs to 241 residues: ATP synthase subunit a (241 aa).

7 consecutive transmembrane segments (helical) span residues 27–47 (NCSL…CWAL), 52–72 (VVPG…ANTL), 87–107 (VMTT…PFGF), 112–132 (HLSV…VIGF), 142–162 (IFLP…IKLF), 175–195 (LAAN…FVLK), and 198–218 (LVLA…EIFV).

It belongs to the ATPase A chain family. In terms of assembly, F-type ATPases have 2 components, CF(1) - the catalytic core - and CF(0) - the membrane proton channel. CF(1) has five subunits: alpha(3), beta(3), gamma(1), delta(1), epsilon(1). CF(0) has three main subunits: a(1), b(2) and c(9-12). The alpha and beta chains form an alternating ring which encloses part of the gamma chain. CF(1) is attached to CF(0) by a central stalk formed by the gamma and epsilon chains, while a peripheral stalk is formed by the delta and b chains.

The protein localises to the cell inner membrane. Key component of the proton channel; it plays a direct role in the translocation of protons across the membrane. This is ATP synthase subunit a from Anaplasma marginale (strain St. Maries).